The primary structure comprises 527 residues: Pyruvate kinase 1, cytosolic (527 aa).

Arginine 58 lines the substrate pocket. Residues aspartate 60, serine 62, aspartate 92, and threonine 93 each coordinate K(+). 60–63 (DFSW) contributes to the ATP binding site. Substrate is bound at residue lysine 256. Position 258 (glutamate 258) interacts with Mg(2+). Substrate is bound by residues glycine 281, asparagine 282, and threonine 313. Asparagine 282 serves as a coordination point for Mg(2+).

The protein belongs to the pyruvate kinase family. In terms of assembly, homotetramer. Mg(2+) is required as a cofactor. K(+) serves as cofactor.

It is found in the cytoplasm. The protein resides in the cytosol. The enzyme catalyses pyruvate + ATP = phosphoenolpyruvate + ADP + H(+). It participates in carbohydrate degradation; glycolysis; pyruvate from D-glyceraldehyde 3-phosphate: step 5/5. Its function is as follows. Key regulatory enzyme of the glycolytic pathway that catalyzes the final step of glycolysis, converting ADP and phosphoenolpyruvate (PEP) to ATP and pyruvate by essentially irreversible transphosphorylation. Is critical for plant growth and development. The sequence is that of Pyruvate kinase 1, cytosolic from Oryza sativa subsp. indica (Rice).